The sequence spans 964 residues: uncharacterized protein (964 aa).

Disordered stretches follow at residues 1–31 and 169–199; these read MDSE…SDCE and EETY…DEIS. The span at 10–27 shows a compositional bias: polar residues; it reads HSICNSVSSGENYKSPES. Residues 656-840 adopt a coiled-coil conformation; it reads EVMESLQVEI…LILNQTSMAK (185 aa).

This is an uncharacterized protein from Caenorhabditis elegans.